Here is a 666-residue protein sequence, read N- to C-terminus: Putative L-type lectin-domain containing receptor kinase V.1 (666 aa).

The N-terminal stretch at 1 to 18 (MVLLLFLVLFFVPESVVC) is a signal peptide. Residues 19 to 289 (QRPNPNGVEF…WIQSPNGILT (271 aa)) are Extracellular-facing. Residues 27–257 (EFNTSGNMYT…SHYILGWTFK (231 aa)) form a legume-lectin like region. Asn29, Asn74, Asn123, Asn176, Asn204, and Asn259 each carry an N-linked (GlcNAc...) asparagine glycan. Residues 290–310 (ISLTVSGVIILIILSLSLWLF) form a helical membrane-spanning segment. Residues 311-666 (LKRKKLLEVL…FTESFVSHGR (356 aa)) lie on the Cytoplasmic side of the membrane. A Protein kinase domain is found at 344–625 (FKDTEVLGKG…SVAQLPHNLL (282 aa)). ATP-binding positions include 350–358 (LGKGGFGKV) and Lys373. Asp469 serves as the catalytic Proton acceptor.

This sequence in the C-terminal section; belongs to the protein kinase superfamily. Ser/Thr protein kinase family. It in the N-terminal section; belongs to the leguminous lectin family.

The protein resides in the cell membrane. The catalysed reaction is L-seryl-[protein] + ATP = O-phospho-L-seryl-[protein] + ADP + H(+). It carries out the reaction L-threonyl-[protein] + ATP = O-phospho-L-threonyl-[protein] + ADP + H(+). The protein is Putative L-type lectin-domain containing receptor kinase V.1 (LECRK51) of Arabidopsis thaliana (Mouse-ear cress).